Consider the following 367-residue polypeptide: 3-dehydroquinate synthase (367 aa).

NAD(+) is bound by residues Gly-108 to Asp-112, Thr-132 to Thr-133, Lys-145, and Lys-154. Residues Glu-187, His-249, and His-267 each coordinate Zn(2+).

It belongs to the sugar phosphate cyclases superfamily. Dehydroquinate synthase family. The cofactor is Co(2+). Requires Zn(2+) as cofactor. It depends on NAD(+) as a cofactor.

It localises to the cytoplasm. It catalyses the reaction 7-phospho-2-dehydro-3-deoxy-D-arabino-heptonate = 3-dehydroquinate + phosphate. It functions in the pathway metabolic intermediate biosynthesis; chorismate biosynthesis; chorismate from D-erythrose 4-phosphate and phosphoenolpyruvate: step 2/7. Functionally, catalyzes the conversion of 3-deoxy-D-arabino-heptulosonate 7-phosphate (DAHP) to dehydroquinate (DHQ). The protein is 3-dehydroquinate synthase of Paracoccus denitrificans (strain Pd 1222).